The sequence spans 84 residues: Translation initiation factor IF-1, chloroplastic (84 aa).

Residues 1 to 72 (MKKQNLVEME…SKGRITYRLR (72 aa)) form the S1-like domain.

The protein belongs to the IF-1 family. Component of the 30S ribosomal translation pre-initiation complex which assembles on the 30S ribosome in the order IF-2 and IF-3, IF-1 and N-formylmethionyl-tRNA(fMet); mRNA recruitment can occur at any time during PIC assembly.

The protein resides in the plastid. It is found in the chloroplast. One of the essential components for the initiation of protein synthesis. Stabilizes the binding of IF-2 and IF-3 on the 30S subunit to which N-formylmethionyl-tRNA(fMet) subsequently binds. Helps modulate mRNA selection, yielding the 30S pre-initiation complex (PIC). Upon addition of the 50S ribosomal subunit IF-1, IF-2 and IF-3 are released leaving the mature 70S translation initiation complex. This is Translation initiation factor IF-1, chloroplastic from Spirogyra maxima (Green alga).